Reading from the N-terminus, the 742-residue chain is NAD(P)H-quinone oxidoreductase subunit 5, chloroplastic (742 aa).

16 helical membrane passes run 9 to 29 (WIIP…LLLF), 40 to 60 (WSFQ…NLSI), 89 to 109 (IDPL…MVLI), 125 to 145 (FAYM…SNLI), 147 to 167 (IYIF…FWFT), 185 to 205 (GDFG…SFEF), 219 to 239 (NEVN…GAIA), 258 to 278 (TPIS…FLVA), 283 to 303 (LFIV…ITVF), 327 to 347 (LGYM…FHLI), 354 to 374 (ALLF…VGYC), 396 to 416 (NSFL…CFWS), 425 to 445 (WLYS…TAFY), 550 to 570 (LFPI…GIPF), 606 to 626 (FFSV…YKPV), and 722 to 742 (YLFF…FFNV).

It belongs to the complex I subunit 5 family. In terms of assembly, NDH is composed of at least 16 different subunits, 5 of which are encoded in the nucleus.

Its subcellular location is the plastid. The protein localises to the chloroplast thylakoid membrane. It catalyses the reaction a plastoquinone + NADH + (n+1) H(+)(in) = a plastoquinol + NAD(+) + n H(+)(out). The catalysed reaction is a plastoquinone + NADPH + (n+1) H(+)(in) = a plastoquinol + NADP(+) + n H(+)(out). NDH shuttles electrons from NAD(P)H:plastoquinone, via FMN and iron-sulfur (Fe-S) centers, to quinones in the photosynthetic chain and possibly in a chloroplast respiratory chain. The immediate electron acceptor for the enzyme in this species is believed to be plastoquinone. Couples the redox reaction to proton translocation, and thus conserves the redox energy in a proton gradient. The polypeptide is NAD(P)H-quinone oxidoreductase subunit 5, chloroplastic (ndhF) (Lactuca sativa (Garden lettuce)).